We begin with the raw amino-acid sequence, 208 residues long: MVKVNVIFHSIHGHTYKMAEAIAEGAREVEGAEVEIYQVPETLPYEVLEKMGAIETKNLFAHIPVVTRSMYEDVFAGADALIFGTPTRYGNMTAQMRTVFDGLGGLWSRDALVGKVGSVFTSSGTQHGGQESTILTTHVTLLHLGMIIVGLPYSETRQRRMDEITGGSPYGASTIAGAEENRQPSENELAMARYQGRHVTQIAKKLIG.

The region spanning 4-199 (VNVIFHSIHG…AMARYQGRHV (196 aa)) is the Flavodoxin-like domain. FMN-binding positions include 10-15 (SIHGHT) and 87-89 (TRY). Residue W107 participates in substrate binding. FMN is bound by residues 122-128 (SSGTQHG) and H143.

This sequence belongs to the WrbA family. Requires FMN as cofactor.

It carries out the reaction a quinone + NADH + H(+) = a quinol + NAD(+). The catalysed reaction is a quinone + NADPH + H(+) = a quinol + NADP(+). The sequence is that of NAD(P)H dehydrogenase (quinone) from Methanosarcina barkeri (strain Fusaro / DSM 804).